Reading from the N-terminus, the 133-residue chain is Profilin-2 (133 aa).

Residues C13 and C117 are joined by a disulfide bond. Residues 83-99 (AVIRGKKGSGGITIKKT) carry the Involved in PIP2 interaction motif. Position 113 is a phosphothreonine (T113).

It belongs to the profilin family. Occurs in many kinds of cells as a complex with monomeric actin in a 1:1 ratio. In terms of processing, phosphorylated by MAP kinases.

Its subcellular location is the cytoplasm. The protein resides in the cytoskeleton. Binds to actin and affects the structure of the cytoskeleton. At high concentrations, profilin prevents the polymerization of actin, whereas it enhances it at low concentrations. The protein is Profilin-2 of Betula pendula (European white birch).